The sequence spans 82 residues: Endocuticle structural protein SgAbd-6 (82 aa).

Gln1 is subject to Pyrrolidone carboxylic acid. Residues 18-82 (LGQYTFGFKT…ENGFQPQYTQ (65 aa)) enclose the Chitin-binding type R&amp;R domain.

Component of the abdominal endocuticle. This chain is Endocuticle structural protein SgAbd-6, found in Schistocerca gregaria (Desert locust).